The chain runs to 295 residues: Elongation factor Ts (295 aa).

Residues 79–82 form an involved in Mg(2+) ion dislocation from EF-Tu region; that stretch reads TDFV.

The protein belongs to the EF-Ts family.

Its subcellular location is the cytoplasm. In terms of biological role, associates with the EF-Tu.GDP complex and induces the exchange of GDP to GTP. It remains bound to the aminoacyl-tRNA.EF-Tu.GTP complex up to the GTP hydrolysis stage on the ribosome. This chain is Elongation factor Ts, found in Mycoplasma capricolum subsp. capricolum (strain California kid / ATCC 27343 / NCTC 10154).